Reading from the N-terminus, the 59-residue chain is Potassium channel toxin alpha-KTx 16.7 (59 aa).

Positions 1–22 (MKILSILLIALVICSISICTEA) are cleaved as a signal peptide. Cystine bridges form between Cys-30–Cys-51, Cys-36–Cys-56, and Cys-40–Cys-58.

It belongs to the short scorpion toxin superfamily. Potassium channel inhibitor family. Alpha-KTx 16 subfamily. Expressed by the venom gland.

The protein resides in the secreted. Functionally, may play a role in blocking voltage-gated potassium channels Kv1.2/KCNA2, and Kv1.3/KCNA3. Blocks the voltage-gated potassium channel Kv1.3/KCNA3, with an IC(50) of 118.3 +-55.8 nM. The chain is Potassium channel toxin alpha-KTx 16.7 from Mesobuthus gibbosus (Mediterranean checkered scorpion).